A 119-amino-acid chain; its full sequence is Chorion class B protein M2807 (119 aa).

Positions 1-11 are left arm; it reads GGLGGGCGRGF. Residues 12–80 are central domain; the sequence is SGGGLPVATA…GNGAVGITRE (69 aa). Residues 81 to 119 form a right arm (Gly-rich tandem repeats) region; it reads GGLGYGAGYGDGYGLGYGGYGGGYGLGYGGYGGCGCGCG.

Belongs to the chorion protein family.

Functionally, this protein is one of many from the eggshell of the silk moth. This Bombyx mori (Silk moth) protein is Chorion class B protein M2807.